The sequence spans 3142 residues: Huntingtin (3142 aa).

The tract at residues 3 to 13 (TLEKLMKAFES) is sufficient for interaction with TPR. Lys-9 bears the N6-acetyllysine mark. The interval 14 to 85 (LKSFQQQQQQ…PGPAVAEEPL (72 aa)) is disordered. Residues 18 to 37 (QQQQQQQQQQQQQQQQQQQQ) show a composition bias toward low complexity. The segment covering 38–78 (QPPPPPPPPPPPQLPQPPPQAQPLLPQPQPPPPPPPPPPGP) has biased composition (pro residues). Lys-176 and Lys-234 each carry N6-acetyllysine. HEAT repeat units follow at residues 204 to 241 (PYLV…SFGN), 246 to 283 (NEIK…HSRR), and 316 to 360 (LTLR…VYEL). N6-acetyllysine is present on Lys-343. A phosphoserine mark is found at Ser-411, Ser-417, Ser-419, and Ser-432. Lys-442 carries the N6-acetyllysine modification. A disordered region spans residues 447 to 469 (EEEALEDDSESRSDVSSSALTAS). The segment at 491–502 (GHDIITEQPRSQ) is interaction with ZDHHC17. A disordered region spans residues 517–583 (LTSSATDGDE…TPSDSSEIVL (67 aa)). The segment covering 531 to 545 (SHSSSQVSAVPSDPA) has biased composition (low complexity). The segment covering 550-579 (DGTQASSPISDSSQTTTEGPDSAVTPSDSS) has biased composition (polar residues). Gly-551 carries the N-myristoyl glycine lipid modification. A phosphoserine mark is found at Ser-640 and Ser-643. 2 HEAT repeats span residues 802–839 (FSLA…SLCS) and 902–940 (KLQE…KLFY). Positions 1176 to 1225 (PSLSPIRRKGKEKEPGEQASVPLSPKKGSEASAASRQSDTSGPVTTSKSS) are disordered. Phosphoserine; by CDK5 occurs at positions 1179 and 1199. Residues 1207–1225 (SAASRQSDTSGPVTTSKSS) show a composition bias toward polar residues. 2 positions are modified to phosphoserine: Ser-1870 and Ser-1874. The disordered stretch occupies residues 2330-2351 (ERRTNTPKAISEEEEEVDPNTQ). A Nuclear export signal motif is present at residues 2395–2404 (IIISLARLPL). Residues 2633–2662 (EEEWDEEEEEEADAPAPSSPPTSPVNSRKH) are disordered. The span at 2634-2645 (EEWDEEEEEEAD) shows a compositional bias: acidic residues.

Belongs to the huntingtin family. In terms of assembly, interacts with PFN1. Interacts through its N-terminus with PRPF40A. Interacts with PQBP1. Interacts with SETD2. Interacts with SH3GLB1. Interacts with SYVN. Interacts with TPR; the interaction is inhibited by forms of Huntingtin with expanded polyglutamine stretch. Interacts with ZDHHC13 (via ANK repeats). Interacts with ZDHHC17 (via ANK repeats). Interacts with F8A1/F8A2/F8A3. Found in a complex with F8A1/F8A2/F8A3, HTT and RAB5A; mediates the recruitment of HTT by RAB5A. Cleaved by caspases downstream of the polyglutamine stretch. The resulting N-terminal fragments are cytotoxic and provokes apoptosis. Post-translationally, forms with expanded polyglutamine expansion are specifically ubiquitinated by SYVN1, which promotes their proteasomal degradation. In terms of processing, phosphorylation at Ser-1179 and Ser-1199 by CDK5 in response to DNA damage in nuclei of neurons protects neurons against polyglutamine expansion as well as DNA damage mediated toxicity. Myristoylated at Gly-551, following proteolytic cleavage at Asp-550. In terms of tissue distribution, expressed in the brain cortex (at protein level). Widely expressed with the highest level of expression in the brain (nerve fibers, varicosities, and nerve endings). In the brain, the regions where it can be mainly found are the cerebellar cortex, the neocortex, the striatum, and the hippocampal formation.

Its subcellular location is the cytoplasm. It is found in the nucleus. The protein localises to the early endosome. It localises to the cytoplasmic vesicle. The protein resides in the autophagosome. Its function is as follows. May play a role in microtubule-mediated transport or vesicle function. Promotes the formation of autophagic vesicles. In Homo sapiens (Human), this protein is Huntingtin (HTT).